A 200-amino-acid chain; its full sequence is Ciliary neurotrophic factor (200 aa).

The protein belongs to the CNTF family. In terms of assembly, homodimer. As to expression, nervous system.

The protein resides in the cytoplasm. In terms of biological role, CNTF is a survival factor for various neuronal cell types. Seems to prevent the degeneration of motor axons after axotomy. The sequence is that of Ciliary neurotrophic factor (CNTF) from Homo sapiens (Human).